The primary structure comprises 310 residues: HPr kinase/phosphorylase (310 aa).

Residues H138 and K159 contribute to the active site. Residue 153–160 coordinates ATP; sequence GKSGVGKS. S160 lines the Mg(2+) pocket. The Proton acceptor; for phosphorylation activity. Proton donor; for dephosphorylation activity role is filled by D177. Residues 201-210 are important for the catalytic mechanism of both phosphorylation and dephosphorylation; sequence LEIRGLGIIN. E202 lines the Mg(2+) pocket. The active site involves R243. The important for the catalytic mechanism of dephosphorylation stretch occupies residues 264–269; it reads PVRPGR.

It belongs to the HPrK/P family. In terms of assembly, homohexamer. Mg(2+) serves as cofactor.

The catalysed reaction is [HPr protein]-L-serine + ATP = [HPr protein]-O-phospho-L-serine + ADP + H(+). The enzyme catalyses [HPr protein]-O-phospho-L-serine + phosphate + H(+) = [HPr protein]-L-serine + diphosphate. Functionally, catalyzes the ATP- as well as the pyrophosphate-dependent phosphorylation of a specific serine residue in HPr, a phosphocarrier protein of the phosphoenolpyruvate-dependent sugar phosphotransferase system (PTS). HprK/P also catalyzes the pyrophosphate-producing, inorganic phosphate-dependent dephosphorylation (phosphorolysis) of seryl-phosphorylated HPr (P-Ser-HPr). The two antagonistic activities of HprK/P are regulated by several intracellular metabolites, which change their concentration in response to the absence or presence of rapidly metabolisable carbon sources (glucose, fructose, etc.) in the growth medium. Also phosphorylates/dephosphorylates the HPr-like catabolite repression protein crh on a specific serine residue. Therefore, by controlling the phosphorylation state of HPr and crh, HPrK/P is a sensor enzyme that plays a major role in the regulation of carbon metabolism and sugar transport: it mediates carbon catabolite repression (CCR), and regulates PTS-catalyzed carbohydrate uptake and inducer exclusion. This chain is HPr kinase/phosphorylase, found in Bacillus licheniformis (strain ATCC 14580 / DSM 13 / JCM 2505 / CCUG 7422 / NBRC 12200 / NCIMB 9375 / NCTC 10341 / NRRL NRS-1264 / Gibson 46).